The primary structure comprises 406 residues: Argininosuccinate synthase (406 aa).

ATP-binding positions include 12-20 and Ala39; that span reads AYSGGLDTS. L-citrulline contacts are provided by Tyr90 and Ser95. Gly120 contacts ATP. Positions 122, 126, and 127 each coordinate L-aspartate. Asn126 contributes to the L-citrulline binding site. Residues Arg130, Ser179, Ser188, Glu264, and Tyr276 each coordinate L-citrulline.

It belongs to the argininosuccinate synthase family. Type 1 subfamily. Homotetramer.

The protein localises to the cytoplasm. It carries out the reaction L-citrulline + L-aspartate + ATP = 2-(N(omega)-L-arginino)succinate + AMP + diphosphate + H(+). It participates in amino-acid biosynthesis; L-arginine biosynthesis; L-arginine from L-ornithine and carbamoyl phosphate: step 2/3. This Geotalea daltonii (strain DSM 22248 / JCM 15807 / FRC-32) (Geobacter daltonii) protein is Argininosuccinate synthase.